We begin with the raw amino-acid sequence, 135 residues long: Interleukin-4 (135 aa).

The first 24 residues, 1–24 (MGLTYQLIPVLVCLLVCTSHFAHG), serve as a signal peptide directing secretion. Intrachain disulfides connect Cys27–Cys135, Cys48–Cys85, and Cys70–Cys105. Asn62 carries N-linked (GlcNAc...) asparagine glycosylation.

It belongs to the IL-4/IL-13 family.

Its subcellular location is the secreted. Its function is as follows. Participates in at least several B-cell activation processes as well as of other cell types. It is a costimulator of DNA-synthesis. It induces the expression of class II MHC molecules on resting B-cells. It enhances both secretion and cell surface expression of IgE and IgG1. It also regulates the expression of the low affinity Fc receptor for IgE (CD23) on both lymphocytes and monocytes. Positively regulates IL31RA expression in macrophages. Stimulates autophagy in dendritic cells by interfering with mTORC1 signaling and through the induction of RUFY4. The protein is Interleukin-4 (IL4) of Boselaphus tragocamelus (Nilgai).